The primary structure comprises 75 residues: U-stichotoxin-Hau3a (75 aa).

Residues 1–19 form the signal peptide; the sequence is MNHLIILVVAAVFLGMASA. Positions 20–26 are excised as a propeptide; it reads EDVFHKR. Cystine bridges form between Cys-31–Cys-71, Cys-33–Cys-61, and Cys-54–Cys-72.

The protein belongs to the sea anemone sodium channel inhibitory toxin family. Type I subfamily. Post-translationally, contains 3 disulfide bonds.

It localises to the secreted. The protein resides in the nematocyst. In terms of biological role, toxin that is lethal to crab. The protein is U-stichotoxin-Hau3a of Heteractis aurora (Banded sea anemone).